A 270-amino-acid polypeptide reads, in one-letter code: 3-methyl-2-oxobutanoate hydroxymethyltransferase (270 aa).

Mg(2+) contacts are provided by Asp-42 and Asp-86. Residues Asp-42 to Ser-43, Asp-86, and Lys-116 each bind 3-methyl-2-oxobutanoate. Glu-118 contacts Mg(2+). The active-site Proton acceptor is the Glu-185.

The protein belongs to the PanB family. As to quaternary structure, homodecamer; pentamer of dimers. Requires Mg(2+) as cofactor.

Its subcellular location is the cytoplasm. The catalysed reaction is 3-methyl-2-oxobutanoate + (6R)-5,10-methylene-5,6,7,8-tetrahydrofolate + H2O = 2-dehydropantoate + (6S)-5,6,7,8-tetrahydrofolate. It functions in the pathway cofactor biosynthesis; (R)-pantothenate biosynthesis; (R)-pantoate from 3-methyl-2-oxobutanoate: step 1/2. Its function is as follows. Catalyzes the reversible reaction in which hydroxymethyl group from 5,10-methylenetetrahydrofolate is transferred onto alpha-ketoisovalerate to form ketopantoate. This chain is 3-methyl-2-oxobutanoate hydroxymethyltransferase, found in Synechococcus sp. (strain CC9902).